The sequence spans 258 residues: Serine protease VLSP-3 (258 aa).

The signal sequence occupies residues 1 to 18; sequence MVLIRVLANLLVLQLSYA. Residues 19–24 constitute a propeptide that is removed on maturation; sequence QKSSEL. The 225-residue stretch at 25–249 folds into the Peptidase S1 domain; it reads VIGGDECNIN…YTDWIQSIIA (225 aa). Cystine bridges form between cysteine 31–cysteine 163, cysteine 50–cysteine 66, cysteine 98–cysteine 256, cysteine 142–cysteine 210, cysteine 174–cysteine 189, and cysteine 200–cysteine 225. A glycan (N-linked (GlcNAc...) asparagine) is linked at asparagine 44. Catalysis depends on histidine 65, which acts as the Charge relay system. N-linked (GlcNAc...) asparagine glycosylation is found at asparagine 79 and asparagine 103. Catalysis depends on aspartate 110, which acts as the Charge relay system. 2 N-linked (GlcNAc...) asparagine glycosylation sites follow: asparagine 154 and asparagine 170. Serine 204 (charge relay system) is an active-site residue. Residue asparagine 251 is glycosylated (N-linked (GlcNAc...) asparagine).

This sequence belongs to the peptidase S1 family. Snake venom subfamily. In terms of assembly, monomer. Expressed by the venom gland.

It is found in the secreted. Its function is as follows. Snake venom serine protease that may act in the hemostasis system of the prey. This chain is Serine protease VLSP-3, found in Macrovipera lebetinus (Levantine viper).